Reading from the N-terminus, the 386-residue chain is ATP phosphoribosyltransferase regulatory subunit (386 aa).

It belongs to the class-II aminoacyl-tRNA synthetase family. HisZ subfamily. In terms of assembly, heteromultimer composed of HisG and HisZ subunits.

The protein resides in the cytoplasm. It participates in amino-acid biosynthesis; L-histidine biosynthesis; L-histidine from 5-phospho-alpha-D-ribose 1-diphosphate: step 1/9. Required for the first step of histidine biosynthesis. May allow the feedback regulation of ATP phosphoribosyltransferase activity by histidine. The sequence is that of ATP phosphoribosyltransferase regulatory subunit from Ralstonia nicotianae (strain ATCC BAA-1114 / GMI1000) (Ralstonia solanacearum).